Reading from the N-terminus, the 143-residue chain is Ribosome-binding factor A (143 aa).

Residues 123–143 (VRAQAAQAKPAGEANPYKERN) form a disordered region. Residues 124–136 (RAQAAQAKPAGEA) are compositionally biased toward low complexity.

It belongs to the RbfA family. In terms of assembly, monomer. Binds 30S ribosomal subunits, but not 50S ribosomal subunits or 70S ribosomes.

The protein resides in the cytoplasm. In terms of biological role, one of several proteins that assist in the late maturation steps of the functional core of the 30S ribosomal subunit. Associates with free 30S ribosomal subunits (but not with 30S subunits that are part of 70S ribosomes or polysomes). Required for efficient processing of 16S rRNA. May interact with the 5'-terminal helix region of 16S rRNA. This chain is Ribosome-binding factor A, found in Corynebacterium urealyticum (strain ATCC 43042 / DSM 7109).